Consider the following 252-residue polypeptide: Small ribosomal subunit protein uS2 (252 aa).

Position 2 is an N-acetylserine (Ser2). A compositionally biased stretch (low complexity) spans 213 to 222; it reads QVAEETAGAA. A disordered region spans residues 213–252; the sequence is QVAEETAGAATEEEEAKEEVTEEQTEATEWAEETTEAVAW. Acidic residues predominate over residues 223–252; sequence TEEEEAKEEVTEEQTEATEWAEETTEAVAW.

It belongs to the universal ribosomal protein uS2 family. Component of the small ribosomal subunit. Mature ribosomes consist of a small (40S) and a large (60S) subunit. The 40S subunit contains about 33 different proteins and 1 molecule of RNA (18S). The 60S subunit contains about 49 different proteins and 3 molecules of RNA (25S, 5.8S and 5S). Interacts with RPS21.

It localises to the cytoplasm. Functionally, required for the assembly and/or stability of the 40S ribosomal subunit. Required for the processing of the 20S rRNA-precursor to mature 18S rRNA in a late step of the maturation of 40S ribosomal subunits. This is Small ribosomal subunit protein uS2 from Zygosaccharomyces rouxii (strain ATCC 2623 / CBS 732 / NBRC 1130 / NCYC 568 / NRRL Y-229).